Here is a 248-residue protein sequence, read N- to C-terminus: Triosephosphate isomerase (248 aa).

9–11 (NWK) contributes to the substrate binding site. Histidine 94 (electrophile) is an active-site residue. Glutamate 166 functions as the Proton acceptor in the catalytic mechanism. Substrate-binding positions include glycine 172, serine 212, and 233-234 (GG).

It belongs to the triosephosphate isomerase family. Homodimer.

The protein resides in the cytoplasm. It catalyses the reaction D-glyceraldehyde 3-phosphate = dihydroxyacetone phosphate. It participates in carbohydrate biosynthesis; gluconeogenesis. Its pathway is carbohydrate degradation; glycolysis; D-glyceraldehyde 3-phosphate from glycerone phosphate: step 1/1. In terms of biological role, involved in the gluconeogenesis. Catalyzes stereospecifically the conversion of dihydroxyacetone phosphate (DHAP) to D-glyceraldehyde-3-phosphate (G3P). In Clostridium botulinum (strain Okra / Type B1), this protein is Triosephosphate isomerase.